Here is a 433-residue protein sequence, read N- to C-terminus: MIKGRRTKLHTFLYDCFLIFAFMVGLPRILYKRFVHGKYTKSLGIRFGFKKPEVPGTGPVAWFHGASVGETALLLPLLKRFMKEYPEWRCVVTSCTESGHENAHRLFGPLGVTTFILPLDLSIIIKPVVRAISPSLLVFSEGDCWLNFIEEAKRLGATAVIINGKLSANSCKRFTILKRFGRNYFSPVDGFLLQDEQHKARFLQLGVDKEKIQVTGNIKTYTETLSENNQRDYWREKLQLAQDTELLVLGSVHPKDVEVWLPVVRELRRNLKVLWVPRHIERSKELEALLSKENISYGLWSKEATFAQHDAIIVDAIGWLKQLYSAADLAFVGGTFDDRIGGHNLLEPLQCGVPLIFGPHIQSQSDLAERLLSMGAGCCLDKTNIVKVITFLLDHPEERAAYIQKGAMFLHEEKVAFDRTWESFKRYIPCVKI.

The helical; Signal-anchor transmembrane segment at 11-31 (TFLYDCFLIFAFMVGLPRILY) threads the bilayer. The active-site Proton acceptor is Glu-70. CMP-binding positions include 277–278 (PR), 317–319 (IGW), and 344–347 (NLLE).

It belongs to the glycosyltransferase group 1 family. Glycosyltransferase 30 subfamily.

The protein resides in the cell inner membrane. It catalyses the reaction lipid IVA (E. coli) + CMP-3-deoxy-beta-D-manno-octulosonate = alpha-Kdo-(2-&gt;6)-lipid IVA (E. coli) + CMP + H(+). The enzyme catalyses alpha-Kdo-(2-&gt;6)-lipid IVA (E. coli) + CMP-3-deoxy-beta-D-manno-octulosonate = alpha-Kdo-(2-&gt;4)-alpha-Kdo-(2-&gt;6)-lipid IVA (E. coli) + CMP + H(+). The catalysed reaction is alpha-Kdo-(2-&gt;4)-alpha-Kdo-(2-&gt;6)-lipid IVA (E. coli) + CMP-3-deoxy-beta-D-manno-octulosonate = alpha-Kdo-(2-&gt;8)-alpha-Kdo-(2-&gt;4)-alpha-Kdo-(2-&gt;6)-lipid IVA (E. coli) + CMP + H(+). It carries out the reaction alpha-Kdo-(2-&gt;8)-alpha-Kdo-(2-&gt;4)-alpha-Kdo-(2-&gt;6)-lipid IVA (E. coli) + CMP-3-deoxy-beta-D-manno-octulosonate = alpha-Kdo-(2-&gt;8)-[alpha-Kdo-(2-&gt;4)]-alpha-Kdo-(2-&gt;4)-alpha-Kdo-(2-&gt;6)-lipid IVA + CMP + H(+). It functions in the pathway bacterial outer membrane biogenesis; LPS core biosynthesis. Functionally, involved in lipopolysaccharide (LPS) biosynthesis. Catalyzes the transfer of predominantly four 3-deoxy-D-manno-octulosonate (Kdo) residues from CMP-Kdo to lipid IV(A), the tetraacyldisaccharide-1,4'-bisphosphate precursor of lipid A. Thus generates the genus-specific LPS epitope of Chlamydia, composed of the trisaccharide alpha-Kdo-(2-&gt;8)-alpha-Kdo-(2-&gt;4)-alpha-Kdo. This is 3-deoxy-D-manno-octulosonic acid transferase (waaA) from Chlamydophila psittaci (strain ATCC VR-125 / 6BC) (Chlamydia psittaci).